The chain runs to 251 residues: tRNA-cytidine(32) 2-sulfurtransferase 2 (251 aa).

Residues 33–38 carry the PP-loop motif motif; it reads SGGKDS. Residues Cys-108, Cys-111, and Cys-199 each coordinate [4Fe-4S] cluster.

It belongs to the TtcA family. Homodimer. Requires Mg(2+) as cofactor. It depends on [4Fe-4S] cluster as a cofactor.

It localises to the cytoplasm. It carries out the reaction cytidine(32) in tRNA + S-sulfanyl-L-cysteinyl-[cysteine desulfurase] + AH2 + ATP = 2-thiocytidine(32) in tRNA + L-cysteinyl-[cysteine desulfurase] + A + AMP + diphosphate + H(+). It functions in the pathway tRNA modification. Functionally, catalyzes the ATP-dependent 2-thiolation of cytidine in position 32 of tRNA, to form 2-thiocytidine (s(2)C32). The sulfur atoms are provided by the cysteine/cysteine desulfurase (IscS) system. The sequence is that of tRNA-cytidine(32) 2-sulfurtransferase 2 from Francisella tularensis subsp. tularensis (strain WY96-3418).